A 399-amino-acid chain; its full sequence is O-glucosyltransferase rumi homolog (399 aa).

Positions 1-18 (MHFIIGIVICLSLSVIQS) are cleaved as a signal peptide. Asparagine 19 and asparagine 67 each carry an N-linked (GlcNAc...) asparagine glycan. Cystine bridges form between cysteine 66/cysteine 73, cysteine 71/cysteine 373, cysteine 118/cysteine 124, and cysteine 277/cysteine 300. Catalysis depends on aspartate 149, which acts as the Proton donor/acceptor. Positions 189-194 (AIALYP) are interaction with the consensus sequence C-X-S-X-[PA]-C in peptide substrates. UDP-alpha-D-glucose is bound by residues 224–228 (RGSRT), arginine 232, 271–273 (VTL), and 289–293 (AASFR).

It belongs to the glycosyltransferase 90 family.

It is found in the endoplasmic reticulum lumen. Its subcellular location is the secreted. It functions in the pathway protein modification; protein glycosylation. Functionally, protein O-glucosyltransferase. Catalyzes the reaction that attaches glucose through an O-glycosidic linkage to a conserved serine residue found in the consensus sequence C-X-S-X-[PA]-C in epidermal growth factor-like repeats. Regulates Notch signaling by glucosylating Notch in the ER, glucosylation is required for the correct folding and cleavage of Notch. This chain is O-glucosyltransferase rumi homolog, found in Anopheles gambiae (African malaria mosquito).